A 402-amino-acid polypeptide reads, in one-letter code: Guanine nucleotide-binding protein subunit alpha-1 (402 aa).

The segment covering 1–12 (MGCSASKPSEPS) has biased composition (polar residues). The interval 1-70 (MGCSASKPSE…PEPQKPAEPA (70 aa)) is disordered. A lipid anchor (N-myristoyl glycine) is attached at Gly-2. The S-palmitoyl cysteine moiety is linked to residue Cys-3. Positions 23–33 (KKVEQVPEPKP) are enriched in basic and acidic residues. A compositionally biased stretch (pro residues) spans 34 to 69 (EPQPQPEPQPQPEPPKPAEPAPAPAPAPEPQKPAEP). Positions 82 to 402 (EAYGLLLCGA…FISDKYYQDA (321 aa)) constitute a G-alpha domain. A G1 motif region spans residues 85-98 (GLLLCGAGESGKTT). Residues Glu-93, Ser-94, Gly-95, Lys-96, Thr-97, Thr-98, Asp-198, Leu-223, Ser-229, Gly-251, Asn-317, Lys-318, Asp-320, and Ala-377 each contribute to the GTP site. A Mg(2+)-binding site is contributed by Thr-97. A G2 motif region spans residues 221-229 (DVLRARIRS). Mg(2+) is bound at residue Ser-229. A G3 motif region spans residues 244 to 253 (IRIFDVGGQK). Positions 313–320 (FLVCNKFD) are G4 motif. Residues 375 to 380 (IVALNG) are G5 motif.

Belongs to the G-alpha family. G proteins are composed of 3 units; alpha, beta and gamma. The alpha chain contains the guanine nucleotide binding site. It depends on Mg(2+) as a cofactor.

Its subcellular location is the cytoplasm. It localises to the perinuclear region. It is found in the endomembrane system. In terms of biological role, guanine nucleotide-binding proteins (G proteins) are involved as modulators or transducers in various transmembrane signaling systems. The chain is Guanine nucleotide-binding protein subunit alpha-1 (GA1) from Trichomonas vaginalis.